We begin with the raw amino-acid sequence, 90 residues long: Large ribosomal subunit protein bL27 (90 aa).

The interval 1–20 (MAHKKAGGSSRNGRDSAGKR) is disordered.

This sequence belongs to the bacterial ribosomal protein bL27 family.

The protein is Large ribosomal subunit protein bL27 of Rhodopseudomonas palustris (strain ATCC BAA-98 / CGA009).